Consider the following 431-residue polypeptide: Probable zinc metalloprotease Lema_P086240 (431 aa).

Asn46 carries an N-linked (GlcNAc...) asparagine glycan. Positions 117, 137, and 170 each coordinate Zn(2+). Asn185 carries N-linked (GlcNAc...) asparagine glycosylation. Asp197 serves as a coordination point for Zn(2+). Asn258, Asn310, Asn349, Asn359, and Asn369 each carry an N-linked (GlcNAc...) asparagine glycan. In terms of domain architecture, Fibronectin type-III spans 344–431 (PGMPRNVTID…KSPAVYPFPG (88 aa)).

It belongs to the peptidase M28 family. M28B subfamily. Zn(2+) serves as cofactor.

It is found in the secreted. The sequence is that of Probable zinc metalloprotease Lema_P086240 from Leptosphaeria maculans (strain JN3 / isolate v23.1.3 / race Av1-4-5-6-7-8) (Blackleg fungus).